The sequence spans 216 residues: DNA repair and recombination protein RadB (216 aa).

The protein belongs to the eukaryotic RecA-like protein family. RadB subfamily.

Involved in DNA repair and in homologous recombination. May regulate the cleavage reactions of the branch-structured DNA. Has a very weak ATPase activity that is not stimulated by DNA. Binds DNA but does not promote DNA strands exchange. The polypeptide is DNA repair and recombination protein RadB (Methanococcus maripaludis (strain C5 / ATCC BAA-1333)).